The chain runs to 523 residues: BTB/POZ domain-containing protein 3 (523 aa).

The ANK repeat unit spans residues 85–114 (FDYSPLVLASLCGHEPVVKFLLENGALCER). BTB domains follow at residues 167–223 (TDIV…RYLY) and 306–373 (HDAY…DIAP).

As to quaternary structure, interacts with cul3. Ubiquitinated and targeted for cul3-dependent degradation.

It localises to the cytoplasm. It functions in the pathway protein modification; protein ubiquitination. Its function is as follows. Probable substrate-specific adapter of an E3 ubiquitin-protein ligase complex which mediates the ubiquitination and subsequent proteasomal degradation of target proteins. This Schizosaccharomyces pombe (strain 972 / ATCC 24843) (Fission yeast) protein is BTB/POZ domain-containing protein 3 (btb3).